Consider the following 412-residue polypeptide: Phosphoglycerate kinase (412 aa).

Residues 26-28 (DFN), arginine 42, 65-68 (HLGR), arginine 133, and arginine 166 contribute to the substrate site. ATP is bound by residues lysine 217, glycine 308, glutamate 339, and 368 to 371 (GGDS).

This sequence belongs to the phosphoglycerate kinase family. As to quaternary structure, monomer.

It is found in the cytoplasm. The catalysed reaction is (2R)-3-phosphoglycerate + ATP = (2R)-3-phospho-glyceroyl phosphate + ADP. It participates in carbohydrate degradation; glycolysis; pyruvate from D-glyceraldehyde 3-phosphate: step 2/5. In Synechococcus sp. (strain JA-2-3B'a(2-13)) (Cyanobacteria bacterium Yellowstone B-Prime), this protein is Phosphoglycerate kinase.